A 163-amino-acid chain; its full sequence is Nucleotide-binding protein HSM_1099 (163 aa).

Belongs to the YajQ family.

Functionally, nucleotide-binding protein. In Histophilus somni (strain 2336) (Haemophilus somnus), this protein is Nucleotide-binding protein HSM_1099.